The primary structure comprises 99 residues: uncharacterized protein (99 aa).

Its subcellular location is the mitochondrion. This is an uncharacterized protein from Marchantia polymorpha (Common liverwort).